Reading from the N-terminus, the 67-residue chain is Phycobilisome 7.8 kDa linker polypeptide, allophycocyanin-associated, core (67 aa).

Positions 1 to 56 (GRLFKITACVPSQTRIRTQRELQNTYFTKLVPYENWFREQQRIQKMGGKIVKVELA) constitute a CpcD-like domain.

Belongs to the phycobilisome linker protein family.

Its subcellular location is the cellular thylakoid membrane. Functionally, rod linker protein, associated with allophycocyanin. Linker polypeptides determine the state of aggregation and the location of the disk-shaped phycobiliprotein units within the phycobilisome and modulate their spectroscopic properties in order to mediate a directed and optimal energy transfer. The sequence is that of Phycobilisome 7.8 kDa linker polypeptide, allophycocyanin-associated, core (apcC) from Mastigocladus laminosus (Fischerella sp.).